A 439-amino-acid polypeptide reads, in one-letter code: Acyl-lipid (8-3)-desaturase (439 aa).

Residues 7–88 (GRSAAREMTA…LPKLDASKVE (82 aa)) form the Cytochrome b5 heme-binding domain. 2 residues coordinate heme: H40 and H66. Residues 123–143 (IPHMIYRVVEIVALFALSFWL) form a helical membrane-spanning segment. The short motif at 171–175 (HEMGH) is the Histidine box-1 element. A Histidine box-2 motif is present at residues 208-213 (HSKHHA). The next 3 membrane-spanning stretches (helical) occupy residues 254-274 (AYLF…LYLH), 287-307 (FVWI…LGYS), and 312-332 (VGMY…QFAV). The Histidine box-3 signature appears at 376-380 (QIEHH).

This sequence belongs to the fatty acid desaturase type 1 family. It depends on Fe(2+) as a cofactor.

Its subcellular location is the membrane. It catalyses the reaction an (8Z,11Z,14Z)-icosatrienoyl-containing glycerolipid + 2 Fe(II)-[cytochrome b5] + O2 + 2 H(+) = (5Z,8Z,11Z,14Z)-eicosatetraenoyl-containing glycerolipid + 2 Fe(III)-[cytochrome b5] + 2 H2O. The enzyme catalyses an (8Z,11Z,14Z,17Z)-eicosatetraenoyl-containing glycerolipid + 2 Fe(II)-[cytochrome b5] + O2 + 2 H(+) = a (5Z,8Z,11Z,14Z,17Z)-eicosapentaenoyl-containing glycerolipid + 2 Fe(III)-[cytochrome b5] + 2 H2O. Its function is as follows. Fatty acid desaturase that introduces a cis double bond at the 5-position in 20-carbon polyunsaturated fatty acids incorporated in a glycerolipid that contain a Delta(8) double bond. The chain is Acyl-lipid (8-3)-desaturase from Thraustochytrium sp.